The sequence spans 168 residues: S-ribosylhomocysteine lyase (168 aa).

The Fe cation site is built by His54, His58, and Cys128.

Belongs to the LuxS family. In terms of assembly, homodimer. The cofactor is Fe cation.

The enzyme catalyses S-(5-deoxy-D-ribos-5-yl)-L-homocysteine = (S)-4,5-dihydroxypentane-2,3-dione + L-homocysteine. Its function is as follows. Involved in the synthesis of autoinducer 2 (AI-2) which is secreted by bacteria and is used to communicate both the cell density and the metabolic potential of the environment. The regulation of gene expression in response to changes in cell density is called quorum sensing. Catalyzes the transformation of S-ribosylhomocysteine (RHC) to homocysteine (HC) and 4,5-dihydroxy-2,3-pentadione (DPD). The sequence is that of S-ribosylhomocysteine lyase from Mannheimia succiniciproducens (strain KCTC 0769BP / MBEL55E).